The chain runs to 136 residues: Peptide deformylase (136 aa).

Positions 85 and 126 each coordinate Fe cation. The active site involves Glu-127. His-130 contributes to the Fe cation binding site.

This sequence belongs to the polypeptide deformylase family. The cofactor is Fe(2+).

It carries out the reaction N-terminal N-formyl-L-methionyl-[peptide] + H2O = N-terminal L-methionyl-[peptide] + formate. In terms of biological role, removes the formyl group from the N-terminal Met of newly synthesized proteins. Requires at least a dipeptide for an efficient rate of reaction. N-terminal L-methionine is a prerequisite for activity but the enzyme has broad specificity at other positions. The protein is Peptide deformylase of Clostridium beijerinckii (strain ATCC 51743 / NCIMB 8052) (Clostridium acetobutylicum).